Consider the following 314-residue polypeptide: Leucine-rich repeat-containing protein 59 (314 aa).

Residues 1 to 247 lie on the Cytoplasmic side of the membrane; sequence MNKGKIENIK…VPKAKRSICS (247 aa). 5 LRR repeats span residues 14–35, 38–60, 61–82, 84–106, and 107–126; these read DGNE…ELAA, KATF…CSLT, HLIK…IGQL, NLQH…SQLK, and SLKW…AKAA. A coiled-coil region spans residues 146–216; that stretch reads MKVLQEEAEK…AVAAQEQQKK (71 aa). 2 disordered regions span residues 165-197 and 212-237; these read REQE…KERK and EQQK…APES. The segment covering 215–225 has biased composition (basic residues); sequence KKKKEEKKKKA. Residues 248–268 traverse the membrane as a helical segment; the sequence is LFFSLLLKLVLLLVIGVSSVV. Over 269-314 the chain is Lumenal; sequence AVCQLTELRKEAFCIPLNVHFEETVRWAQGLDVVQQVIQKMSDLRT.

Interacts with SGO1.

It localises to the microsome membrane. The protein localises to the endoplasmic reticulum membrane. Its subcellular location is the nucleus envelope. Required for nuclear import of FGF1. The sequence is that of Leucine-rich repeat-containing protein 59 (lrrc59) from Danio rerio (Zebrafish).